The following is a 229-amino-acid chain: Prolactin (229 aa).

The signal sequence occupies residues 1–30; the sequence is MDSKGSAQKGSRLLLLLVVSNLLLCQGVVS. The cysteines at positions 34 and 41 are disulfide-linked. Residues Ser56, Ser64, and Ser120 each carry the phosphoserine modification. Disulfide bonds link Cys88/Cys204 and Cys221/Cys229.

It belongs to the somatotropin/prolactin family. Interacts with PRLR.

Its subcellular location is the secreted. Functionally, prolactin acts primarily on the mammary gland by promoting lactation. The chain is Prolactin (PRL) from Capra hircus (Goat).